Here is a 959-residue protein sequence, read N- to C-terminus: Isoleucine--tRNA ligase (959 aa).

Positions 60–70 (PYANGSLHMGH) match the 'HIGH' region motif. Glu569 lines the L-isoleucyl-5'-AMP pocket. The 'KMSKS' region signature appears at 610-614 (KMSKS). Lys613 contributes to the ATP binding site. 4 residues coordinate Zn(2+): Cys928, Cys931, Cys948, and Cys951.

Belongs to the class-I aminoacyl-tRNA synthetase family. IleS type 1 subfamily. In terms of assembly, monomer. Zn(2+) serves as cofactor.

The protein resides in the cytoplasm. It catalyses the reaction tRNA(Ile) + L-isoleucine + ATP = L-isoleucyl-tRNA(Ile) + AMP + diphosphate. Its function is as follows. Catalyzes the attachment of isoleucine to tRNA(Ile). As IleRS can inadvertently accommodate and process structurally similar amino acids such as valine, to avoid such errors it has two additional distinct tRNA(Ile)-dependent editing activities. One activity is designated as 'pretransfer' editing and involves the hydrolysis of activated Val-AMP. The other activity is designated 'posttransfer' editing and involves deacylation of mischarged Val-tRNA(Ile). The protein is Isoleucine--tRNA ligase of Crocosphaera subtropica (strain ATCC 51142 / BH68) (Cyanothece sp. (strain ATCC 51142)).